The primary structure comprises 132 residues: Small ribosomal subunit protein uS8 (132 aa).

Belongs to the universal ribosomal protein uS8 family. Part of the 30S ribosomal subunit. Contacts proteins S5 and S12.

One of the primary rRNA binding proteins, it binds directly to 16S rRNA central domain where it helps coordinate assembly of the platform of the 30S subunit. The polypeptide is Small ribosomal subunit protein uS8 (Nitrobacter hamburgensis (strain DSM 10229 / NCIMB 13809 / X14)).